Here is a 127-residue protein sequence, read N- to C-terminus: Small ribosomal subunit protein uS11 (127 aa).

The protein belongs to the universal ribosomal protein uS11 family. As to quaternary structure, part of the 30S ribosomal subunit. Interacts with proteins S7 and S18. Binds to IF-3.

Functionally, located on the platform of the 30S subunit, it bridges several disparate RNA helices of the 16S rRNA. Forms part of the Shine-Dalgarno cleft in the 70S ribosome. This is Small ribosomal subunit protein uS11 from Rickettsia bellii (strain RML369-C).